Reading from the N-terminus, the 125-residue chain is Translation initiation factor 5A (125 aa).

Lys-35 is modified (hypusine).

The protein belongs to the eIF-5A family.

The protein resides in the cytoplasm. Its function is as follows. Functions by promoting the formation of the first peptide bond. In Methanoculleus marisnigri (strain ATCC 35101 / DSM 1498 / JR1), this protein is Translation initiation factor 5A (eIF5A).